The sequence spans 148 residues: MKLILTQEVPGLGSPGDIVEVANGYGRNYLVPRKYAILATKGAERQVEQIKRARSARAVRDLGHAQEIAGQLGGLKVELISRAGKEGRLFGSVTAADVVEAVTAAGGPELDRRRVELTTPIKSLGAYTVAVHLHPEVTASVKLQVKKA.

The protein belongs to the bacterial ribosomal protein bL9 family.

In terms of biological role, binds to the 23S rRNA. This is Large ribosomal subunit protein bL9 from Frankia alni (strain DSM 45986 / CECT 9034 / ACN14a).